The chain runs to 588 residues: Transmembrane protein 201 homolog (588 aa).

Residues 1–212 (MEVAAAVGVI…FFFAGGSTCE (212 aa)) are Nuclear-facing. A helical membrane pass occupies residues 213–233 (ALHFGCLISSIILFLANIDFL). Over 234-254 (QQDAGASLINLPKALQDILPE) the chain is Perinuclear space. Residues 255–275 (VYKYSFVINFLIFTTHLIAAF) traverse the membrane as a helical segment. Residues 276–280 (NNKCR) are Nuclear-facing. A helical transmembrane segment spans residues 281-301 (VTLPDLLLPILLILAMLTVLT). Topologically, residues 302-309 (SSDNLSQD) are perinuclear space. The helical transmembrane segment at 310–330 (VALVRGACASFSTILSMAVTL) threads the bilayer. Topologically, residues 331 to 564 (LPRKKLHKKR…SGAWQCRVIG (234 aa)) are nuclear. The tract at residues 378–457 (RRSPHTPSAS…QSTRSSHFKP (80 aa)) is disordered. Residues 384–396 (PSASPPAMNSSPP) show a composition bias toward low complexity. Composition is skewed to polar residues over residues 418-430 (NMQS…NNHV) and 441-452 (MAAQSVAQSTRS). A helical membrane pass occupies residues 565-585 (ILFALVFIVLIMQIGLFYVLF). The Perinuclear space segment spans residues 586–588 (TRN).

Belongs to the TMEM201 family.

It localises to the nucleus inner membrane. Functionally, plays a role in nuclear migration in hypodermal cells. This is Transmembrane protein 201 homolog from Caenorhabditis elegans.